Reading from the N-terminus, the 577-residue chain is DEAD-box ATP-dependent RNA helicase 22 (577 aa).

Residues T82 to A110 carry the Q motif motif. The Helicase ATP-binding domain occupies I113–N375. ATP is bound at residue A126–T133. Residues D249 to D252 carry the DEAD box motif. The interval S288–L317 is disordered. The Helicase C-terminal domain occupies L407 to A568.

This sequence belongs to the DEAD box helicase family.

It carries out the reaction ATP + H2O = ADP + phosphate + H(+). The chain is DEAD-box ATP-dependent RNA helicase 22 from Oryza sativa subsp. japonica (Rice).